Reading from the N-terminus, the 334-residue chain is Ribosomal RNA small subunit methyltransferase H (334 aa).

Residues 1–21 (MNALPIRTAAPSGHSGGHSST) form a disordered region. Residues 52–54 (GGY), aspartate 71, phenylalanine 98, aspartate 119, and glutamine 126 each bind S-adenosyl-L-methionine.

It belongs to the methyltransferase superfamily. RsmH family.

It is found in the cytoplasm. The enzyme catalyses cytidine(1402) in 16S rRNA + S-adenosyl-L-methionine = N(4)-methylcytidine(1402) in 16S rRNA + S-adenosyl-L-homocysteine + H(+). Specifically methylates the N4 position of cytidine in position 1402 (C1402) of 16S rRNA. In Granulibacter bethesdensis (strain ATCC BAA-1260 / CGDNIH1), this protein is Ribosomal RNA small subunit methyltransferase H.